A 185-amino-acid polypeptide reads, in one-letter code: Calcium-binding protein CML37 (185 aa).

Polar residues predominate over residues 1–12 (MTLAKNQKSSLS). Positions 1-45 (MTLAKNQKSSLSRLYKKVSSKRSESSRNLEDESRTSSNSSGSSSL) are disordered. Residues 21-34 (KRSESSRNLEDESR) show a composition bias toward basic and acidic residues. Positions 35–44 (TSSNSSGSSS) are enriched in low complexity. EF-hand domains follow at residues 45-80 (LNVNELRTVFDYMDANSDGKISGEELQSCVSLLGGA), 81-116 (LSSREVEEVVKTSDVDGDGFIDFEEFLKLMEGEDGS), 119-154 (ERRKELKEAFGMYVMEGEEFITAASLRRTLSRLGES), and 155-185 (CTVDACKVMIRGFDQNDDGVLSFDEFVLMMR). Asp58, Asn60, Asp62, Lys64, Glu69, Asp94, Asp96, Asp98, and Glu105 together coordinate Ca(2+). Residues Asp168, Asn170, Asp172, and Glu179 each contribute to the Ca(2+) site.

In terms of assembly, binds to ABCG36. As to expression, expressed in cotyledons, stipule, young leaves and at the hypocotyl-root junction. In mature root, expressed in the stele, cortex, emerging lateral root, root tip and root cap. In mature plant, expressed at the base of cauline and floral branches, and in rosette and cauline leaves. Expressed from stage 9 to 14 of flower development in anthers. At stage 15, expressed in carpel, sepals, petals and pollen until dehiscence. Expressed in developing seeds and young siliques.

In terms of biological role, potential calcium sensor that binds calcium in vitro. In Arabidopsis thaliana (Mouse-ear cress), this protein is Calcium-binding protein CML37.